A 145-amino-acid chain; its full sequence is Plastocyanin, chloroplastic (145 aa).

A chloroplast-targeting transit peptide spans 1-47; it reads MKATLRAPASRASAVRPVASLKAAAQRVASVAGVSVASLALTLAAHA. The 98-residue stretch at 48 to 145 folds into the Plastocyanin-like domain; the sequence is DATVKLGADS…AGMVGKIIVQ (98 aa). Residues His85, Cys130, His133, and Met138 each contribute to the Cu cation site.

This sequence belongs to the plastocyanin family. Requires Cu(2+) as cofactor.

The protein localises to the plastid. It localises to the chloroplast thylakoid membrane. Its function is as follows. Participates in electron transfer between P700 and the cytochrome b6-f complex in photosystem I. The polypeptide is Plastocyanin, chloroplastic (PETE) (Chlamydomonas reinhardtii (Chlamydomonas smithii)).